The chain runs to 63 residues: Chromatin protein Cren7 (63 aa).

It belongs to the Cren7 family. In terms of assembly, monomer. Methylated at multiple sites, to varying extents.

The protein resides in the chromosome. It is found in the cytoplasm. In terms of biological role, a chromatin protein, binds double-stranded DNA without sequence specificity. Constrains negative DNA supercoils. This is Chromatin protein Cren7 from Pyrobaculum calidifontis (strain DSM 21063 / JCM 11548 / VA1).